A 445-amino-acid polypeptide reads, in one-letter code: MPPSAASEGGVAELRAAEVASYTRKAVDERPDLTIVGDAVYDAKAFRDEHPGGAHFVSLFGGRDATEAFMEYHRRAWPKARMSKFFVGSLDASEKPTQADSAYLRLCAEVNALLPKGSGGFAPPSYWLKAAALVVAAVSIEGYMLLRGKTLLLSVFLGLVFAWIGLNIQHDANHGALSRHSVINYCLGYAQDWIGGNMVLWLQEHVVMHHLHTNDVDADPDQKAHGVLRLKPTDGWMPWHALQQLYILPGEAMYAFKLLFLDALELLAWRWEGEKISPLARALFAPAVACKLGFWARFVALPLWLQPTVHTALCICATVCTGSFYLAFFFFISHNFDGVGSVGPKGSLPRSATFVQRQVETSSNVGGYWLGVLNGGLNFQIEHHLFPRLHHSYYAQIAPVVRTHIEKLGFKYRHFPTVGSNLSSMLQHMGKMGTRPGAEKGGKAE.

A Cytochrome b5 heme-binding domain is found at 11–91 (VAELRAAEVA…MSKFFVGSLD (81 aa)). Residues H50 and H73 each coordinate heme. Helical transmembrane passes span 126–146 (YWLK…YMLL) and 148–168 (GKTL…GLNI). The Histidine box-1 signature appears at 170-174 (HDANH). Positions 205-210 (HVVMHH) match the Histidine box-2 motif. Helical transmembrane passes span 247 to 267 (ILPG…LELL), 283 to 303 (LFAP…ALPL), and 312 to 332 (ALCI…FFFI). The short motif at 380–384 (QIEHH) is the Histidine box-3 element.

This sequence belongs to the fatty acid desaturase type 1 family. Requires Fe(2+) as cofactor.

The protein resides in the membrane. It carries out the reaction a (7Z,10Z,13Z,16Z,19Z)-docosapentaenoyl-containing glycerolipid + 2 Fe(II)-[cytochrome b5] + O2 + 2 H(+) = a (4Z,7Z,10Z,13Z,16Z,19Z)-docosahexaenoyl-containing glycerolipid + 2 Fe(III)-[cytochrome b5] + 2 H2O. The catalysed reaction is a (7Z,10Z,13Z,16Z)-docosatetraenoyl-containing glycerolipid + 2 Fe(II)-[cytochrome b5] + O2 + 2 H(+) = a (4Z,7Z,10Z,13Z,16Z)-docosapentaenoyl-containing glycerolipid + 2 Fe(III)-[cytochrome b5] + 2 H2O. In terms of biological role, fatty acid desaturase that introduces a cis double bond at the 4-position in 22-carbon polyunsaturated fatty acids that contain a Delta(7) double bond, resulting in the production of delta-4 desaturated fatty acid docosahexanoic acid (DHA). Mediates desaturation of 22:5n-3 and 22:4n-6 into 22:6n-3 and 22:5n-6 respectively. This chain is Acyl-lipid (7-3)-desaturase, found in Diacronema lutheri (Unicellular marine alga).